The sequence spans 179 residues: ATP synthase subunit b (179 aa).

The chain crosses the membrane as a helical span at residues 13-33 (IHIDELVFGLIAFAVIFALVY).

It belongs to the ATPase B chain family. F-type ATPases have 2 components, F(1) - the catalytic core - and F(0) - the membrane proton channel. F(1) has five subunits: alpha(3), beta(3), gamma(1), delta(1), epsilon(1). F(0) has three main subunits: a(1), b(2) and c(10-14). The alpha and beta chains form an alternating ring which encloses part of the gamma chain. F(1) is attached to F(0) by a central stalk formed by the gamma and epsilon chains, while a peripheral stalk is formed by the delta and b chains.

It is found in the cell membrane. In terms of biological role, f(1)F(0) ATP synthase produces ATP from ADP in the presence of a proton or sodium gradient. F-type ATPases consist of two structural domains, F(1) containing the extramembraneous catalytic core and F(0) containing the membrane proton channel, linked together by a central stalk and a peripheral stalk. During catalysis, ATP synthesis in the catalytic domain of F(1) is coupled via a rotary mechanism of the central stalk subunits to proton translocation. Component of the F(0) channel, it forms part of the peripheral stalk, linking F(1) to F(0). The polypeptide is ATP synthase subunit b (Thermobifida fusca (strain YX)).